Reading from the N-terminus, the 287-residue chain is Acetyl-coenzyme A carboxylase carboxyl transferase subunit beta (287 aa).

Positions 28-287 constitute a CoA carboxyltransferase N-terminal domain; sequence LWKKCPKCEN…ILSLLTNKVA (260 aa). Residues cysteine 32, cysteine 35, cysteine 51, and cysteine 54 each contribute to the Zn(2+) site. A C4-type zinc finger spans residues 32–54; that stretch reads CPKCENVLYRPELEKNLDVCPKC.

It belongs to the AccD/PCCB family. Acetyl-CoA carboxylase is a heterohexamer composed of biotin carboxyl carrier protein (AccB), biotin carboxylase (AccC) and two subunits each of ACCase subunit alpha (AccA) and ACCase subunit beta (AccD). It depends on Zn(2+) as a cofactor.

The protein localises to the cytoplasm. The enzyme catalyses N(6)-carboxybiotinyl-L-lysyl-[protein] + acetyl-CoA = N(6)-biotinyl-L-lysyl-[protein] + malonyl-CoA. Its pathway is lipid metabolism; malonyl-CoA biosynthesis; malonyl-CoA from acetyl-CoA: step 1/1. Its function is as follows. Component of the acetyl coenzyme A carboxylase (ACC) complex. Biotin carboxylase (BC) catalyzes the carboxylation of biotin on its carrier protein (BCCP) and then the CO(2) group is transferred by the transcarboxylase to acetyl-CoA to form malonyl-CoA. This Marinomonas sp. (strain MWYL1) protein is Acetyl-coenzyme A carboxylase carboxyl transferase subunit beta.